A 1067-amino-acid chain; its full sequence is Hemoglobin and hemoglobin-haptoglobin-binding protein B (1067 aa).

The first 24 residues, 1–24 (MTNFKFSLLACSIAFALNASTAYA), serve as a signal peptide directing secretion. Tandem repeats lie at residues 26–29 (QPTN), 30–33 (QPTN), 34–37 (QPTN), 38–41 (QPTN), 42–45 (QPTN), and 46–49 (QPTN). Residues 26-49 (QPTNQPTNQPTNQPTNQPTNQPTN) are 6 X 4 AA tandem repeats of Q-P-T-N. Residues 26-51 (QPTNQPTNQPTNQPTNQPTNQPTNQN) are compositionally biased toward low complexity. The interval 26–53 (QPTNQPTNQPTNQPTNQPTNQPTNQNSN) is disordered. The TonB box signature appears at 59 to 66 (EQINVSGS). Residues 71 to 196 (NIKEKKVGET…LGGSVIFETK (126 aa)) form the TBDR plug domain. One can recognise a TBDR beta-barrel domain in the interval 204–1067 (DKDYYLSYKR…NYRMSVQFEF (864 aa)). Positions 1050-1067 (NRFYAPGRNYRMSVQFEF) match the TonB C-terminal box motif.

The protein belongs to the TonB-dependent receptor family. Hemoglobin/haptoglobin binding protein subfamily.

It is found in the cell outer membrane. Acts as a receptor for hemoglobin or the hemoglobin/haptoglobin complex of the human host and is required for heme uptake. This is Hemoglobin and hemoglobin-haptoglobin-binding protein B (hgbB) from Haemophilus influenzae.